We begin with the raw amino-acid sequence, 403 residues long: Large ribosomal subunit protein uL3 (403 aa).

The segment at 1–37 (MSHRKFSAPRHGSLGFLPRKRSSRHRGKVKSFPKDDP) is disordered. S13 bears the Phosphoserine mark. The segment covering 18 to 31 (PRKRSSRHRGKVKS) has biased composition (basic residues). A Glycyl lysine isopeptide (Lys-Gly) (interchain with G-Cter in SUMO2) cross-link involves residue K39. K136 is modified (N6-acetyllysine). Glycyl lysine isopeptide (Lys-Gly) (interchain with G-Cter in SUMO2) cross-links involve residues K224 and K226. At H245 the chain carries Tele-methylhistidine. Residues K286 and K294 each carry the N6-acetyllysine; alternate modification. A Glycyl lysine isopeptide (Lys-Gly) (interchain with G-Cter in SUMO2); alternate cross-link involves residue K286. K294 is covalently cross-linked (Glycyl lysine isopeptide (Lys-Gly) (interchain with G-Cter in SUMO1); alternate). A Phosphoserine modification is found at S304. Residue K366 is modified to N6-acetyllysine; alternate. Residue K366 forms a Glycyl lysine isopeptide (Lys-Gly) (interchain with G-Cter in SUMO2); alternate linkage. K373 carries the N6-acetyllysine modification. Glycyl lysine isopeptide (Lys-Gly) (interchain with G-Cter in SUMO2) cross-links involve residues K386, K393, and K399.

The protein belongs to the universal ribosomal protein uL3 family. As to quaternary structure, component of the large ribosomal subunit. Interacts with DHX33. Constitutively monomethylated at His-245 by METTL18. Methylation at His-245 regulates translation elongation by slowing ribosome traversal on tyrosine codons: slower elongation provides enough time for proper folding of synthesized proteins and prevents cellular aggregation of tyrosine-rich proteins. It is not required for incorporation of RPL3 into ribosomes.

The protein localises to the nucleus. It localises to the nucleolus. Its subcellular location is the cytoplasm. Component of the large ribosomal subunit. The ribosome is a large ribonucleoprotein complex responsible for the synthesis of proteins in the cell. In Rattus norvegicus (Rat), this protein is Large ribosomal subunit protein uL3 (Rpl3).